The chain runs to 153 residues: D-aminoacyl-tRNA deacylase (153 aa).

The Gly-cisPro motif, important for rejection of L-amino acids signature appears at 137 to 138 (GP).

It belongs to the DTD family. As to quaternary structure, homodimer.

The protein localises to the cytoplasm. The catalysed reaction is glycyl-tRNA(Ala) + H2O = tRNA(Ala) + glycine + H(+). It catalyses the reaction a D-aminoacyl-tRNA + H2O = a tRNA + a D-alpha-amino acid + H(+). An aminoacyl-tRNA editing enzyme that deacylates mischarged D-aminoacyl-tRNAs. Also deacylates mischarged glycyl-tRNA(Ala), protecting cells against glycine mischarging by AlaRS. Acts via tRNA-based rather than protein-based catalysis; rejects L-amino acids rather than detecting D-amino acids in the active site. By recycling D-aminoacyl-tRNA to D-amino acids and free tRNA molecules, this enzyme counteracts the toxicity associated with the formation of D-aminoacyl-tRNA entities in vivo and helps enforce protein L-homochirality. This Herpetosiphon aurantiacus (strain ATCC 23779 / DSM 785 / 114-95) protein is D-aminoacyl-tRNA deacylase.